Reading from the N-terminus, the 323-residue chain is GTP 3',8-cyclase (323 aa).

The Radical SAM core domain maps to 4 to 226; the sequence is TFQRQINYLR…LEPFPDLATN (223 aa). R13 is a binding site for GTP. The [4Fe-4S] cluster site is built by C20 and C24. Residue Y26 coordinates S-adenosyl-L-methionine. Position 27 (C27) interacts with [4Fe-4S] cluster. R63 provides a ligand contact to GTP. S-adenosyl-L-methionine is bound at residue G67. T94 provides a ligand contact to GTP. Position 118 (S118) interacts with S-adenosyl-L-methionine. K155 contacts GTP. M189 serves as a coordination point for S-adenosyl-L-methionine. [4Fe-4S] cluster contacts are provided by C252 and C255. A GTP-binding site is contributed by 257-259; it reads RLR. [4Fe-4S] cluster is bound at residue C269.

It belongs to the radical SAM superfamily. MoaA family. Monomer and homodimer. Requires [4Fe-4S] cluster as cofactor.

The catalysed reaction is GTP + AH2 + S-adenosyl-L-methionine = (8S)-3',8-cyclo-7,8-dihydroguanosine 5'-triphosphate + 5'-deoxyadenosine + L-methionine + A + H(+). It functions in the pathway cofactor biosynthesis; molybdopterin biosynthesis. In terms of biological role, catalyzes the cyclization of GTP to (8S)-3',8-cyclo-7,8-dihydroguanosine 5'-triphosphate. The sequence is that of GTP 3',8-cyclase from Moorella thermoacetica (strain ATCC 39073 / JCM 9320).